The chain runs to 293 residues: Small ribosomal subunit protein uS5 (293 aa).

Positions 1 to 56 are disordered; it reads MADDAGAAGGPGGPGGPGMGGRGGFRGGFGSGVRGRGRGRGRGRGRGRGARGGKAE. N-acetylalanine is present on A2. Gly residues predominate over residues 7 to 34; it reads AAGGPGGPGGPGMGGRGGFRGGFGSGVR. Basic residues predominate over residues 35-51; that stretch reads GRGRGRGRGRGRGRGAR. Glycyl lysine isopeptide (Lys-Gly) (interchain with G-Cter in ubiquitin) cross-links involve residues K54 and K58. The S5 DRBM domain occupies 102 to 165; the sequence is LKDEVLKIMP…ILAKLSIVPV (64 aa). Phosphothreonine is present on T252. K263 is subject to N6-acetyllysine. The residue at position 264 (S264) is a Phosphoserine. At T270 the chain carries Phosphothreonine. The residue at position 275 (K275) is an N6-acetyllysine; alternate. Residue K275 forms a Glycyl lysine isopeptide (Lys-Gly) (interchain with G-Cter in SUMO1); alternate linkage. A Glycyl lysine isopeptide (Lys-Gly) (interchain with G-Cter in SUMO2); alternate cross-link involves residue K275. K275 participates in a covalent cross-link: Glycyl lysine isopeptide (Lys-Gly) (interchain with G-Cter in ubiquitin); alternate. At S281 the chain carries Phosphoserine.

Belongs to the universal ribosomal protein uS5 family. In terms of assembly, component of the small ribosomal subunit. Interacts with zinc finger protein ZNF277 (via zinc-finger domains); the interaction is direct; the interaction is extra-ribosomal. Interaction with ZNF277 competes with the binding of RPS2 to protein arginine methyltransferase PRMT3. Post-translationally, citrullinated by PADI4 in the Arg/Gly-rich region. In terms of processing, asymmetric arginine dimethylation by PRMT3 occurs at multiple sites in the Arg/Gly-rich region. Monoubiquitinated at Lys-54 and Lys-58 by RNF10 when a ribosome has stalled during translation, leading to its degradation by the proteasome. Deubiquitinated at Lys-54 and Lys-58 by USP10, preventing degradation by the proteasome and promoting 40S ribosome subunit recycling following ribosome dissociation.

The protein localises to the cytoplasm. It localises to the nucleus. The protein resides in the nucleolus. In terms of biological role, component of the ribosome, a large ribonucleoprotein complex responsible for the synthesis of proteins in the cell. The small ribosomal subunit (SSU) binds messenger RNAs (mRNAs) and translates the encoded message by selecting cognate aminoacyl-transfer RNA (tRNA) molecules. The large subunit (LSU) contains the ribosomal catalytic site termed the peptidyl transferase center (PTC), which catalyzes the formation of peptide bonds, thereby polymerizing the amino acids delivered by tRNAs into a polypeptide chain. The nascent polypeptides leave the ribosome through a tunnel in the LSU and interact with protein factors that function in enzymatic processing, targeting, and the membrane insertion of nascent chains at the exit of the ribosomal tunnel. Plays a role in the assembly and function of the 40S ribosomal subunit. Mutations in this protein affects the control of translational fidelity. Involved in nucleolar processing of pre-18S ribosomal RNA and ribosome assembly. In Bos taurus (Bovine), this protein is Small ribosomal subunit protein uS5 (RPS2).